A 295-amino-acid polypeptide reads, in one-letter code: Cytidine deaminase (295 aa).

2 CMP/dCMP-type deaminase domains span residues 48-168 (ADDE…FGPA) and 187-295 (EETT…YLAI). Position 89-91 (89-91 (NLE)) interacts with substrate. A Zn(2+)-binding site is contributed by His102. Glu104 serves as the catalytic Proton donor. Zn(2+)-binding residues include Cys129 and Cys132.

Belongs to the cytidine and deoxycytidylate deaminase family. As to quaternary structure, homodimer. Zn(2+) serves as cofactor.

The enzyme catalyses cytidine + H2O + H(+) = uridine + NH4(+). It catalyses the reaction 2'-deoxycytidine + H2O + H(+) = 2'-deoxyuridine + NH4(+). This enzyme scavenges exogenous and endogenous cytidine and 2'-deoxycytidine for UMP synthesis. In Vibrio atlanticus (strain LGP32) (Vibrio splendidus (strain Mel32)), this protein is Cytidine deaminase.